A 704-amino-acid chain; its full sequence is Elongation factor G 1 (704 aa).

Positions 8–285 (EKIRNIGISA…AVCAFLPNPK (278 aa)) constitute a tr-type G domain. GTP-binding positions include 17–24 (AHIDSGKT), 84–88 (DTPGH), and 138–141 (NKMD).

Belongs to the TRAFAC class translation factor GTPase superfamily. Classic translation factor GTPase family. EF-G/EF-2 subfamily.

Its subcellular location is the cytoplasm. Functionally, catalyzes the GTP-dependent ribosomal translocation step during translation elongation. During this step, the ribosome changes from the pre-translocational (PRE) to the post-translocational (POST) state as the newly formed A-site-bound peptidyl-tRNA and P-site-bound deacylated tRNA move to the P and E sites, respectively. Catalyzes the coordinated movement of the two tRNA molecules, the mRNA and conformational changes in the ribosome. The protein is Elongation factor G 1 of Myxococcus xanthus (strain DK1622).